An 81-amino-acid polypeptide reads, in one-letter code: UPF0248 protein SSO2687 (81 aa).

The protein belongs to the UPF0248 family.

The polypeptide is UPF0248 protein SSO2687 (Saccharolobus solfataricus (strain ATCC 35092 / DSM 1617 / JCM 11322 / P2) (Sulfolobus solfataricus)).